Consider the following 423-residue polypeptide: 3-phosphoshikimate 1-carboxyvinyltransferase (423 aa).

Positions 20, 21, and 25 each coordinate 3-phosphoshikimate. Lys20 is a phosphoenolpyruvate binding site. Phosphoenolpyruvate contacts are provided by Gly91 and Arg119. 3-phosphoshikimate contacts are provided by Thr163, Ser164, Gln165, Asp305, Gln328, and Lys332. Position 165 (Gln165) interacts with phosphoenolpyruvate. Catalysis depends on Asp305, which acts as the Proton acceptor. The phosphoenolpyruvate site is built by Arg336 and Arg377.

Belongs to the EPSP synthase family. In terms of assembly, monomer.

It is found in the cytoplasm. It carries out the reaction 3-phosphoshikimate + phosphoenolpyruvate = 5-O-(1-carboxyvinyl)-3-phosphoshikimate + phosphate. It participates in metabolic intermediate biosynthesis; chorismate biosynthesis; chorismate from D-erythrose 4-phosphate and phosphoenolpyruvate: step 6/7. Catalyzes the transfer of the enolpyruvyl moiety of phosphoenolpyruvate (PEP) to the 5-hydroxyl of shikimate-3-phosphate (S3P) to produce enolpyruvyl shikimate-3-phosphate and inorganic phosphate. This is 3-phosphoshikimate 1-carboxyvinyltransferase from Acetivibrio thermocellus (strain ATCC 27405 / DSM 1237 / JCM 9322 / NBRC 103400 / NCIMB 10682 / NRRL B-4536 / VPI 7372) (Clostridium thermocellum).